A 508-amino-acid chain; its full sequence is Rhamnogalacturonan I rhamnosyltransferase 1 (508 aa).

A helical; Signal-anchor for type II membrane protein transmembrane segment spans residues 41-63 (LWMIRAVTVLLLWSCFVHLMALG). N136, N202, and N223 each carry an N-linked (GlcNAc...) asparagine glycan. 277–279 (HLR) is a binding site for substrate. N391 carries N-linked (GlcNAc...) asparagine glycosylation.

This sequence belongs to the glycosyltransferase GT106 family. In terms of tissue distribution, highly expressed in siliques. Expressed in stems and flowers. Expressed at low levels in roots and rosette leaves.

Its subcellular location is the golgi apparatus membrane. It carries out the reaction alpha-D-galacturonosyl-[(1-&gt;2)-alpha-L-rhamnosyl-(1-&gt;4)-alpha-D-galacturonosyl](n) + UDP-beta-L-rhamnose = [(1-&gt;2)-alpha-L-rhamnosyl-(1-&gt;4)-alpha-D-galacturonosyl](n+1) + UDP + H(+). It functions in the pathway glycan metabolism; pectin biosynthesis. Glycosyltransferase involved in the formation of rhamnogalacturonan I (RG-I) oligosaccharides in the seed coat mucilage, which is a specialized cell wall with abundant RG-I. Transfers the rhamnose residue from UDP-beta-L-rhamnose to RG-I oligosaccharides. Prefers RG-I oligosaccharides with a degree of polymerization of 5 or larger than 5. Does not act on oligosaccharides with a degree of polymerization of 4 or smaller than 4. Does not require metal ions for its activity. The protein is Rhamnogalacturonan I rhamnosyltransferase 1 of Arabidopsis thaliana (Mouse-ear cress).